A 129-amino-acid polypeptide reads, in one-letter code: Small ribosomal subunit protein bS6 (129 aa).

Residues 110 to 121 (FVRRDDERREDT) show a composition bias toward basic and acidic residues. Positions 110 to 129 (FVRRDDERREDTVEAASSEE) are disordered.

It belongs to the bacterial ribosomal protein bS6 family.

Functionally, binds together with bS18 to 16S ribosomal RNA. The polypeptide is Small ribosomal subunit protein bS6 (Aeromonas salmonicida (strain A449)).